A 767-amino-acid chain; its full sequence is Phosphoribosylformylglycinamidine synthase subunit PurL (767 aa).

The active site involves histidine 65. Tyrosine 68 and lysine 112 together coordinate ATP. Glutamate 114 contributes to the Mg(2+) binding site. Residues 115–118 (SHNH) and arginine 137 each bind substrate. Residue histidine 116 is the Proton acceptor of the active site. Aspartate 138 lines the Mg(2+) pocket. Glutamine 262 serves as a coordination point for substrate. Position 290 (aspartate 290) interacts with Mg(2+). 334 to 336 (ESQ) is a substrate binding site. The ATP site is built by aspartate 522 and glycine 559. Residue asparagine 560 coordinates Mg(2+). Residue serine 562 participates in substrate binding.

Belongs to the FGAMS family. Monomer. Part of the FGAM synthase complex composed of 1 PurL, 1 PurQ and 2 PurS subunits.

Its subcellular location is the cytoplasm. The catalysed reaction is N(2)-formyl-N(1)-(5-phospho-beta-D-ribosyl)glycinamide + L-glutamine + ATP + H2O = 2-formamido-N(1)-(5-O-phospho-beta-D-ribosyl)acetamidine + L-glutamate + ADP + phosphate + H(+). It participates in purine metabolism; IMP biosynthesis via de novo pathway; 5-amino-1-(5-phospho-D-ribosyl)imidazole from N(2)-formyl-N(1)-(5-phospho-D-ribosyl)glycinamide: step 1/2. Part of the phosphoribosylformylglycinamidine synthase complex involved in the purines biosynthetic pathway. Catalyzes the ATP-dependent conversion of formylglycinamide ribonucleotide (FGAR) and glutamine to yield formylglycinamidine ribonucleotide (FGAM) and glutamate. The FGAM synthase complex is composed of three subunits. PurQ produces an ammonia molecule by converting glutamine to glutamate. PurL transfers the ammonia molecule to FGAR to form FGAM in an ATP-dependent manner. PurS interacts with PurQ and PurL and is thought to assist in the transfer of the ammonia molecule from PurQ to PurL. This chain is Phosphoribosylformylglycinamidine synthase subunit PurL, found in Renibacterium salmoninarum (strain ATCC 33209 / DSM 20767 / JCM 11484 / NBRC 15589 / NCIMB 2235).